A 290-amino-acid chain; its full sequence is Nucleotide-binding protein XfasM23_0667 (290 aa).

Residue 13 to 20 participates in ATP binding; the sequence is GLSGSGKS. Residue 65–68 participates in GTP binding; it reads DIRS.

This sequence belongs to the RapZ-like family.

In terms of biological role, displays ATPase and GTPase activities. This Xylella fastidiosa (strain M23) protein is Nucleotide-binding protein XfasM23_0667.